Reading from the N-terminus, the 137-residue chain is Venom allergen 4 (137 aa).

An N-terminal signal peptide occupies residues 1–19 (MKTFVLVSCLLVFTQIIYA).

Belongs to the ant venom allergen 2/4 family. In terms of assembly, monomer. As to expression, expressed by the venom gland.

Its subcellular location is the secreted. The polypeptide is Venom allergen 4 (Solenopsis geminata (Tropical fire ant)).